A 338-amino-acid polypeptide reads, in one-letter code: Holliday junction branch migration complex subunit RuvB (338 aa).

The segment at 1–22 (MVDDERVVSPETADDHEDSVEK) is disordered. Residues 4-185 (DERVVSPETA…FGIVEHMAYY (182 aa)) are large ATPase domain (RuvB-L). Residues Leu24, Arg25, Gly66, Lys69, Thr70, Thr71, 132–134 (EDF), Arg175, Tyr185, and Arg222 each bind ATP. Mg(2+) is bound at residue Thr70. Residues 186 to 257 (ETTDLQEIVL…IVDHALDLLR (72 aa)) are small ATPAse domain (RuvB-S). The head domain (RuvB-H) stretch occupies residues 260–338 (SAGLDATDIK…HLGRTMPDNN (79 aa)). DNA is bound by residues Arg315 and Arg320.

The protein belongs to the RuvB family. Homohexamer. Forms an RuvA(8)-RuvB(12)-Holliday junction (HJ) complex. HJ DNA is sandwiched between 2 RuvA tetramers; dsDNA enters through RuvA and exits via RuvB. An RuvB hexamer assembles on each DNA strand where it exits the tetramer. Each RuvB hexamer is contacted by two RuvA subunits (via domain III) on 2 adjacent RuvB subunits; this complex drives branch migration. In the full resolvosome a probable DNA-RuvA(4)-RuvB(12)-RuvC(2) complex forms which resolves the HJ.

It localises to the cytoplasm. The enzyme catalyses ATP + H2O = ADP + phosphate + H(+). Functionally, the RuvA-RuvB-RuvC complex processes Holliday junction (HJ) DNA during genetic recombination and DNA repair, while the RuvA-RuvB complex plays an important role in the rescue of blocked DNA replication forks via replication fork reversal (RFR). RuvA specifically binds to HJ cruciform DNA, conferring on it an open structure. The RuvB hexamer acts as an ATP-dependent pump, pulling dsDNA into and through the RuvAB complex. RuvB forms 2 homohexamers on either side of HJ DNA bound by 1 or 2 RuvA tetramers; 4 subunits per hexamer contact DNA at a time. Coordinated motions by a converter formed by DNA-disengaged RuvB subunits stimulates ATP hydrolysis and nucleotide exchange. Immobilization of the converter enables RuvB to convert the ATP-contained energy into a lever motion, pulling 2 nucleotides of DNA out of the RuvA tetramer per ATP hydrolyzed, thus driving DNA branch migration. The RuvB motors rotate together with the DNA substrate, which together with the progressing nucleotide cycle form the mechanistic basis for DNA recombination by continuous HJ branch migration. Branch migration allows RuvC to scan DNA until it finds its consensus sequence, where it cleaves and resolves cruciform DNA. The sequence is that of Holliday junction branch migration complex subunit RuvB from Levilactobacillus brevis (strain ATCC 367 / BCRC 12310 / CIP 105137 / JCM 1170 / LMG 11437 / NCIMB 947 / NCTC 947) (Lactobacillus brevis).